The chain runs to 186 residues: Phosphoheptose isomerase 1 (186 aa).

One can recognise an SIS domain in the interval 33 to 186 (LCECLKKGGK…TLCQIIDESF (154 aa)). Residue 48 to 50 (NGG) participates in substrate binding. Positions 57 and 61 each coordinate Zn(2+). Residues Glu61, 90 to 91 (ND), 116 to 118 (STS), Ser121, and Gln168 contribute to the substrate site. Positions 168 and 176 each coordinate Zn(2+).

Belongs to the SIS family. GmhA subfamily. As to quaternary structure, homotetramer. Zn(2+) serves as cofactor.

Its subcellular location is the cytoplasm. The enzyme catalyses 2 D-sedoheptulose 7-phosphate = D-glycero-alpha-D-manno-heptose 7-phosphate + D-glycero-beta-D-manno-heptose 7-phosphate. Its pathway is carbohydrate biosynthesis; D-glycero-D-manno-heptose 7-phosphate biosynthesis; D-glycero-alpha-D-manno-heptose 7-phosphate and D-glycero-beta-D-manno-heptose 7-phosphate from sedoheptulose 7-phosphate: step 1/1. It participates in bacterial outer membrane biogenesis; LOS core biosynthesis. Catalyzes the isomerization of sedoheptulose 7-phosphate in D-glycero-D-manno-heptose 7-phosphate. In Campylobacter jejuni subsp. jejuni serotype O:2 (strain ATCC 700819 / NCTC 11168), this protein is Phosphoheptose isomerase 1 (gmhA1).